We begin with the raw amino-acid sequence, 445 residues long: Argininosuccinate synthase (445 aa).

ATP-binding positions include 17-25 and A43; that span reads AFSGGLDTS. L-citrulline is bound at residue Y99. ATP is bound by residues G129 and T131. L-aspartate contacts are provided by T131, N135, and D136. Residue N135 coordinates L-citrulline. D136 is an ATP binding site. The L-citrulline site is built by R139 and S192. D194 lines the ATP pocket. Positions 201, 203, and 280 each coordinate L-citrulline.

This sequence belongs to the argininosuccinate synthase family. Type 2 subfamily. As to quaternary structure, homotetramer.

It localises to the cytoplasm. It carries out the reaction L-citrulline + L-aspartate + ATP = 2-(N(omega)-L-arginino)succinate + AMP + diphosphate + H(+). It functions in the pathway amino-acid biosynthesis; L-arginine biosynthesis; L-arginine from L-ornithine and carbamoyl phosphate: step 2/3. This is Argininosuccinate synthase from Bordetella petrii (strain ATCC BAA-461 / DSM 12804 / CCUG 43448).